A 148-amino-acid polypeptide reads, in one-letter code: Antitoxin Xre (148 aa).

It belongs to the MbcA/ParS/Xre antitoxin family. As to quaternary structure, homodimer. Forms a complex with cognate toxin Rse.

In terms of biological role, antitoxin component of a type II toxin-antitoxin (TA) system. Neutralizes the activity of cognate toxin Res. The polypeptide is Antitoxin Xre (Yersinia enterocolitica serotype O:8 / biotype 1B (strain NCTC 13174 / 8081)).